A 133-amino-acid polypeptide reads, in one-letter code: MESVRQQKVARLILKEMADIFLKESRVLFGNVFISITVVRMSPDLSVAKLYLSIMLQEDKNAILKEIKVHTKELRKLLGERIRKQVRIIPEIIFYLDDNVDYANHMDDVLSKITIPKKEDENFDPNQYPGLKE.

This sequence belongs to the RbfA family. As to quaternary structure, monomer. Binds 30S ribosomal subunits, but not 50S ribosomal subunits or 70S ribosomes.

The protein resides in the cytoplasm. Its function is as follows. One of several proteins that assist in the late maturation steps of the functional core of the 30S ribosomal subunit. Associates with free 30S ribosomal subunits (but not with 30S subunits that are part of 70S ribosomes or polysomes). Required for efficient processing of 16S rRNA. May interact with the 5'-terminal helix region of 16S rRNA. The chain is Ribosome-binding factor A from Cytophaga hutchinsonii (strain ATCC 33406 / DSM 1761 / CIP 103989 / NBRC 15051 / NCIMB 9469 / D465).